The primary structure comprises 444 residues: 23S rRNA (uracil(1939)-C(5))-methyltransferase RlmD (444 aa).

One can recognise a TRAM domain in the interval 5-64; that stretch reads KPKLNLTSQTARIVNLSHDGRGIARVNGKATFIQGALPGEVVEFQYTRIKKDFDEGKLLS. The [4Fe-4S] cluster site is built by Cys-77, Cys-83, Cys-86, and Cys-166. The S-adenosyl-L-methionine site is built by Gln-276, Phe-305, Asn-310, Glu-326, Asn-353, and Asp-374. Residue Cys-400 is the Nucleophile of the active site.

Belongs to the class I-like SAM-binding methyltransferase superfamily. RNA M5U methyltransferase family. RlmD subfamily.

The enzyme catalyses uridine(1939) in 23S rRNA + S-adenosyl-L-methionine = 5-methyluridine(1939) in 23S rRNA + S-adenosyl-L-homocysteine + H(+). Its function is as follows. Catalyzes the formation of 5-methyl-uridine at position 1939 (m5U1939) in 23S rRNA. This Legionella pneumophila (strain Corby) protein is 23S rRNA (uracil(1939)-C(5))-methyltransferase RlmD.